We begin with the raw amino-acid sequence, 310 residues long: Methionyl-tRNA formyltransferase (310 aa).

109–112 (SLLP) is a binding site for (6S)-5,6,7,8-tetrahydrofolate.

The protein belongs to the Fmt family.

It carries out the reaction L-methionyl-tRNA(fMet) + (6R)-10-formyltetrahydrofolate = N-formyl-L-methionyl-tRNA(fMet) + (6S)-5,6,7,8-tetrahydrofolate + H(+). Its function is as follows. Attaches a formyl group to the free amino group of methionyl-tRNA(fMet). The formyl group appears to play a dual role in the initiator identity of N-formylmethionyl-tRNA by promoting its recognition by IF2 and preventing the misappropriation of this tRNA by the elongation apparatus. This is Methionyl-tRNA formyltransferase from Chloroflexus aurantiacus (strain ATCC 29366 / DSM 635 / J-10-fl).